We begin with the raw amino-acid sequence, 359 residues long: Membrane-bound lytic murein transglycosylase C (359 aa).

The N-terminal stretch at Met-1 to Ser-16 is a signal peptide. Cys-17 carries the N-palmitoyl cysteine lipid modification. The S-diacylglycerol cysteine moiety is linked to residue Cys-17.

Belongs to the transglycosylase Slt family.

Its subcellular location is the cell outer membrane. The catalysed reaction is Exolytic cleavage of the (1-&gt;4)-beta-glycosidic linkage between N-acetylmuramic acid (MurNAc) and N-acetylglucosamine (GlcNAc) residues in peptidoglycan, from either the reducing or the non-reducing ends of the peptidoglycan chains, with concomitant formation of a 1,6-anhydrobond in the MurNAc residue.. Functionally, murein-degrading enzyme. May play a role in recycling of muropeptides during cell elongation and/or cell division. The chain is Membrane-bound lytic murein transglycosylase C from Escherichia fergusonii (strain ATCC 35469 / DSM 13698 / CCUG 18766 / IAM 14443 / JCM 21226 / LMG 7866 / NBRC 102419 / NCTC 12128 / CDC 0568-73).